A 445-amino-acid polypeptide reads, in one-letter code: Trigger factor (445 aa).

The 86-residue stretch at 162 to 247 (GDQVTIDAIG…IKAVHTAEPT (86 aa)) folds into the PPIase FKBP-type domain.

It belongs to the FKBP-type PPIase family. Tig subfamily.

It is found in the cytoplasm. It carries out the reaction [protein]-peptidylproline (omega=180) = [protein]-peptidylproline (omega=0). In terms of biological role, involved in protein export. Acts as a chaperone by maintaining the newly synthesized protein in an open conformation. Functions as a peptidyl-prolyl cis-trans isomerase. The chain is Trigger factor from Rickettsia africae (strain ESF-5).